The sequence spans 727 residues: Probable acyl-activating enzyme 18, peroxisomal (727 aa).

Positions 725–727 (SRI) match the Microbody targeting signal motif.

It belongs to the ATP-dependent AMP-binding enzyme family. In terms of tissue distribution, expressed in flowers.

It is found in the peroxisome. Functionally, may be involved in the peroxisomal activation of 2,4-dichlorophenoxybutyric acid (2,4-DB), a precursor of active auxins that inhibit root growth. In Arabidopsis thaliana (Mouse-ear cress), this protein is Probable acyl-activating enzyme 18, peroxisomal (AAE18).